The primary structure comprises 329 residues: Delta(7)-sterol 5(6)-desaturase erg32 (329 aa).

2 helical membrane-spanning segments follow: residues 67-87 (LFLI…SFAY) and 149-169 (FYLF…IYWI). One can recognise a Fatty acid hydroxylase domain in the interval 156-281 (ALFLLFSDFL…FFTLFDRLCS (126 aa)). The short motif at 170–175 (HRALHH) is the Histidine box-1 element. A Histidine box-2 motif is present at residues 183–187 (HKLHH). Residues 210 to 230 (LPYHMFPFFFPLNKYVYLLLF) traverse the membrane as a helical segment. Positions 257 to 262 (HHAAHH) match the Histidine box-3 motif.

This sequence belongs to the sterol desaturase family. Requires Fe cation as cofactor.

It localises to the endoplasmic reticulum membrane. The protein localises to the golgi apparatus membrane. It catalyses the reaction episterol + 2 Fe(II)-[cytochrome b5] + O2 + 2 H(+) = 5-dehydroepisterol + 2 Fe(III)-[cytochrome b5] + 2 H2O. It functions in the pathway steroid metabolism; ergosterol biosynthesis. C-5 sterol desaturase; part of the third module of ergosterol biosynthesis pathway that includes by the late steps of the pathway. Erg31 and erg32 catalyze the introduction of a C-5 double bond in the B ring to produce 5-dehydroepisterol. The third module or late pathway involves the ergosterol synthesis itself through consecutive reactions that mainly occur in the endoplasmic reticulum (ER) membrane. Firstly, the squalene synthase erg9 catalyzes the condensation of 2 farnesyl pyrophosphate moieties to form squalene, which is the precursor of all steroids. Secondly, squalene is converted into lanosterol by the consecutive action of the squalene epoxidase erg1 and the lanosterol synthase erg7. The lanosterol 14-alpha-demethylase erg11/cyp1 catalyzes C14-demethylation of lanosterol to produce 4,4'-dimethyl cholesta-8,14,24-triene-3-beta-ol. In the next steps, a complex process involving various demethylation, reduction and desaturation reactions catalyzed by the C-14 reductase erg24 and the C-4 demethylation complex erg25-erg26-erg27 leads to the production of zymosterol. Erg28 likely functions in the C-4 demethylation complex reaction by tethering erg26 and Erg27 to the endoplasmic reticulum or to facilitate interaction between these proteins. Then, the sterol 24-C-methyltransferase erg6 catalyzes the methyl transfer from S-adenosyl-methionine to the C-24 of zymosterol to form fecosterol. The C-8 sterol isomerase erg2 catalyzes the reaction which results in unsaturation at C-7 in the B ring of sterols and thus converts fecosterol to episterol. The sterol-C5-desaturases erg31 and erg32 then catalyze the introduction of a C-5 double bond in the B ring to produce 5-dehydroepisterol. The C-22 sterol desaturase erg5 further converts 5-dehydroepisterol into ergosta-5,7,22,24(28)-tetraen-3beta-ol by forming the C-22(23) double bond in the sterol side chain. Finally, ergosta-5,7,22,24(28)-tetraen-3beta-ol is substrate of the C-24(28) sterol reductase erg4 to produce ergosterol. In the genus Schizosaccharomyces, a second route exists between lanosterol and fecosterol, via the methylation of lanosterol to eburicol by erg6, followed by C14-demethylation by erg11/cyp1 and C4-demethylation by the demethylation complex erg25-erg26-erg27. The protein is Delta(7)-sterol 5(6)-desaturase erg32 of Schizosaccharomyces pombe (strain 972 / ATCC 24843) (Fission yeast).